A 415-amino-acid chain; its full sequence is Erythronolide mycarosyltransferase (415 aa).

This sequence belongs to the glycosyltransferase 28 family.

The catalysed reaction is dTDP-beta-L-mycarose + erythronolide B = 3-O-alpha-L-mycarosylerythronolide B + dTDP + H(+). Functionally, involved in the biosynthesis of the macrolide antibiotic erythromycin. Catalyzes the reversible transfer of mycarosyl from dTDP-beta-L-mycarose to erythronolide B to yield 3-alpha-L-mycarosylerythronolide B. It can also use TDP-beta-L-cladinose. This chain is Erythronolide mycarosyltransferase, found in Saccharopolyspora erythraea (Streptomyces erythraeus).